Here is a 196-residue protein sequence, read N- to C-terminus: Thymidine kinase (196 aa).

ATP is bound by residues 9-16 and 85-88; these read GTMNSGKS and DEAQ. Glutamate 86 functions as the Proton acceptor in the catalytic mechanism. Residues cysteine 143, cysteine 146, cysteine 180, and histidine 183 each coordinate Zn(2+).

It belongs to the thymidine kinase family. As to quaternary structure, homotetramer.

It is found in the cytoplasm. The catalysed reaction is thymidine + ATP = dTMP + ADP + H(+). The sequence is that of Thymidine kinase from Streptococcus thermophilus (strain CNRZ 1066).